A 242-amino-acid chain; its full sequence is Aquaporin (242 aa).

Over 1-11 (MNTSTKLICQK) the chain is Cytoplasmic. Residues 12–32 (LFAEMLCSCIFGFAVYSAILN) traverse the membrane as a helical segment. At 33–39 (TKASNSS) the chain is on the extracellular side. Residues 40–60 (ISSTTVGLTVCFSSISLIYTF) traverse the membrane as a helical segment. The Cytoplasmic portion of the chain corresponds to 61-83 (CDHSVAHFNPAITIAAICTGKLD). Residues 69–71 (NPA) carry the NPA motif. The helical transmembrane segment at 84–104 (ILLGIGYVIAQLIGFILATLL) threads the bilayer. At 105 to 133 (TVVCFPYGYLKTMEFIASARISDDISTVN) the chain is on the extracellular side. The helical transmembrane segment at 134–154 (LFFTEFILSFILVFIAFEVGI) threads the bilayer. Residues 155–175 (NAIREPGVTLFVGIKQIDRSK) are Cytoplasmic-facing. The chain crosses the membrane as a helical span at residues 176-196 (FAPLTIGITLGFLAFLASTTS). The Extracellular segment spans residues 197 to 217 (GGAFNPGIVWGPAIMGGNFDD). The NPG signature appears at 201–203 (NPG). A helical membrane pass occupies residues 218 to 238 (FVIYIISELSGGLLGAFIQVF). Residues 239–242 (LLFK) are Cytoplasmic-facing.

It belongs to the MIP/aquaporin (TC 1.A.8) family.

It localises to the cell membrane. Functionally, water channel required to facilitate the transport of water across membranes. Involved in osmotolerance. The protein is Aquaporin (AQP) of Enterocytozoon bieneusi (strain H348) (Microsporidian parasite).